A 207-amino-acid chain; its full sequence is High frequency lysogenization protein HflD homolog (207 aa).

It belongs to the HflD family.

It is found in the cytoplasm. Its subcellular location is the cell inner membrane. The sequence is that of High frequency lysogenization protein HflD homolog from Pseudomonas fluorescens (strain ATCC BAA-477 / NRRL B-23932 / Pf-5).